The primary structure comprises 248 residues: Ubiquinone/menaquinone biosynthesis C-methyltransferase UbiE (248 aa).

Ser-68 and Asp-92 together coordinate S-adenosyl-L-methionine.

Belongs to the class I-like SAM-binding methyltransferase superfamily. MenG/UbiE family.

The enzyme catalyses a 2-demethylmenaquinol + S-adenosyl-L-methionine = a menaquinol + S-adenosyl-L-homocysteine + H(+). It catalyses the reaction a 2-methoxy-6-(all-trans-polyprenyl)benzene-1,4-diol + S-adenosyl-L-methionine = a 5-methoxy-2-methyl-3-(all-trans-polyprenyl)benzene-1,4-diol + S-adenosyl-L-homocysteine + H(+). It participates in quinol/quinone metabolism; menaquinone biosynthesis; menaquinol from 1,4-dihydroxy-2-naphthoate: step 2/2. Its pathway is cofactor biosynthesis; ubiquinone biosynthesis. Methyltransferase required for the conversion of demethylmenaquinol (DMKH2) to menaquinol (MKH2) and the conversion of 2-polyprenyl-6-methoxy-1,4-benzoquinol (DDMQH2) to 2-polyprenyl-3-methyl-6-methoxy-1,4-benzoquinol (DMQH2). The protein is Ubiquinone/menaquinone biosynthesis C-methyltransferase UbiE of Rickettsia akari (strain Hartford).